The primary structure comprises 199 residues: Protein shisa-like-1 (199 aa).

The signal sequence occupies residues 1 to 25 (MTSCGQQSLNVLAVLFSLLFSAVLS). At 26–97 (AHFRVCEPYT…SEGYMHNNYT (72 aa)) the chain is on the extracellular side. 2 N-linked (GlcNAc...) asparagine glycosylation sites follow: Asn-53 and Asn-95. The chain crosses the membrane as a helical span at residues 98 to 118 (ALLGVWIYGFFVLMLLVLDLL). The Cytoplasmic portion of the chain corresponds to 119–199 (YYSAMNYDIC…PLMTFQSSSA (81 aa)). The interval 146 to 199 (PRRWGNPARAPRPGQRAPQPQPPPGPLPQAPQAVHTLRGDAHSPPLMTFQSSSA) is disordered. The span at 152–163 (PARAPRPGQRAP) shows a compositional bias: low complexity. Positions 164–174 (QPQPPPGPLPQ) are enriched in pro residues.

It belongs to the shisa family.

The protein localises to the membrane. In Homo sapiens (Human), this protein is Protein shisa-like-1.